Here is a 200-residue protein sequence, read N- to C-terminus: dITP/XTP pyrophosphatase (200 aa).

7–12 (TQNKRK) contacts substrate. Mg(2+) contacts are provided by glutamate 42 and aspartate 71. The active-site Proton acceptor is the aspartate 71. Substrate-binding positions include serine 72, 156-159 (FGYD), lysine 179, and 184-185 (HR).

It belongs to the HAM1 NTPase family. Homodimer. Requires Mg(2+) as cofactor.

It catalyses the reaction XTP + H2O = XMP + diphosphate + H(+). It carries out the reaction dITP + H2O = dIMP + diphosphate + H(+). The enzyme catalyses ITP + H2O = IMP + diphosphate + H(+). Functionally, pyrophosphatase that catalyzes the hydrolysis of nucleoside triphosphates to their monophosphate derivatives, with a high preference for the non-canonical purine nucleotides XTP (xanthosine triphosphate), dITP (deoxyinosine triphosphate) and ITP. Seems to function as a house-cleaning enzyme that removes non-canonical purine nucleotides from the nucleotide pool, thus preventing their incorporation into DNA/RNA and avoiding chromosomal lesions. This is dITP/XTP pyrophosphatase from Malacoplasma penetrans (strain HF-2) (Mycoplasma penetrans).